The primary structure comprises 352 residues: Selenide, water dikinase (352 aa).

C23 is an active-site residue. ATP-binding positions include K26 and 54 to 56; that span reads SRD. D57 contributes to the Mg(2+) binding site. ATP contacts are provided by residues D74, D97, and 145 to 147; that span reads GHS. Residue D97 participates in Mg(2+) binding. D233 is a binding site for Mg(2+).

Belongs to the selenophosphate synthase 1 family. Class I subfamily. In terms of assembly, homodimer. Requires Mg(2+) as cofactor.

The enzyme catalyses hydrogenselenide + ATP + H2O = selenophosphate + AMP + phosphate + 2 H(+). In terms of biological role, synthesizes selenophosphate from selenide and ATP. In Shewanella sp. (strain MR-7), this protein is Selenide, water dikinase.